Consider the following 422-residue polypeptide: AP-1 complex subunit mu-1-I (422 aa).

In terms of domain architecture, MHD spans 167–420 (KNEVFLDVIE…ITQNGEYEMR (254 aa)).

It belongs to the adaptor complexes medium subunit family. As to quaternary structure, adaptor protein complex 1 (AP-1) is a heterotetramer composed of two large adaptins (gamma- and beta'-type subunits), a medium adaptin (mu-type subunit AP47) and a small adaptin (sigma-type subunit AP19). Interacts (via N-terminus) with kvs-4. Expressed in the cholinergic motor neuron DA9.

It is found in the golgi apparatus. Its subcellular location is the cytoplasmic vesicle. It localises to the clathrin-coated vesicle membrane. The protein resides in the cell projection. The protein localises to the dendrite. Its function is as follows. Component of the adaptor complexes which link clathrin to receptors in coated vesicles. Clathrin-associated protein complexes are believed to interact with the cytoplasmic tails of membrane proteins, leading to their selection and concentration. Required for many aspects of development and behavior, including negative regulation of vulval differentiation. Required for the dendritic localization of potassium channel kvs-4 in the cholinergic motor neuron DA9. This Caenorhabditis elegans protein is AP-1 complex subunit mu-1-I (unc-101).